The following is a 182-amino-acid chain: Protein LIGHT-DEPENDENT SHORT HYPOCOTYLS 5 (182 aa).

The segment covering 1 to 16 (MEGETAAKAAASSSSS) has biased composition (low complexity). Disordered stretches follow at residues 1-22 (MEGE…RYES) and 138-168 (ARGI…DAEG). Residues 19-147 (RYESQKRRDW…ARGIPYDKKK (129 aa)) form the ALOG domain. Residues 145–149 (KKKRK) carry the Nuclear localization signal motif.

It belongs to the plant homeotic and developmental regulators ALOG protein family.

It is found in the nucleus. Probable transcription regulator that acts as a developmental regulator by promoting cell growth in response to light. This is Protein LIGHT-DEPENDENT SHORT HYPOCOTYLS 5 (LSH5) from Arabidopsis thaliana (Mouse-ear cress).